The primary structure comprises 90 residues: Translation initiation factor IF-1 2 (90 aa).

The 72-residue stretch at 1–72 (MAKEELLELD…TKGRINFRHK (72 aa)) folds into the S1-like domain.

This sequence belongs to the IF-1 family. In terms of assembly, component of the 30S ribosomal translation pre-initiation complex which assembles on the 30S ribosome in the order IF-2 and IF-3, IF-1 and N-formylmethionyl-tRNA(fMet); mRNA recruitment can occur at any time during PIC assembly.

Its subcellular location is the cytoplasm. In terms of biological role, one of the essential components for the initiation of protein synthesis. Stabilizes the binding of IF-2 and IF-3 on the 30S subunit to which N-formylmethionyl-tRNA(fMet) subsequently binds. Helps modulate mRNA selection, yielding the 30S pre-initiation complex (PIC). Upon addition of the 50S ribosomal subunit IF-1, IF-2 and IF-3 are released leaving the mature 70S translation initiation complex. The chain is Translation initiation factor IF-1 2 from Paraburkholderia xenovorans (strain LB400).